The sequence spans 332 residues: DNA-directed RNA polymerase subunit alpha (332 aa).

The interval 1-244 (MKKHAKVYYS…AHLNLLADVE (244 aa)) is alpha N-terminal domain (alpha-NTD). Residues 259–332 (IKEEPIRRFS…NYKNENKGEN (74 aa)) are alpha C-terminal domain (alpha-CTD).

Belongs to the RNA polymerase alpha chain family. In terms of assembly, homodimer. The RNAP catalytic core consists of 2 alpha, 1 beta, 1 beta' and 1 omega subunit. When a sigma factor is associated with the core the holoenzyme is formed, which can initiate transcription.

It carries out the reaction RNA(n) + a ribonucleoside 5'-triphosphate = RNA(n+1) + diphosphate. DNA-dependent RNA polymerase catalyzes the transcription of DNA into RNA using the four ribonucleoside triphosphates as substrates. The sequence is that of DNA-directed RNA polymerase subunit alpha from Mesomycoplasma hyopneumoniae (strain 7448) (Mycoplasma hyopneumoniae).